A 317-amino-acid polypeptide reads, in one-letter code: Melanocyte-stimulating hormone receptor (317 aa).

Residues 1 to 37 (MPAQGSQRSLLGSLNSTLMATSSLGLSANQSGPQCLE) are Extracellular-facing. Residues Asn15 and Asn29 are each glycosylated (N-linked (GlcNAc...) asparagine). Residues 38–63 (VSVPDGLFLCLGLVSLVENMLVVAAI) form a helical membrane-spanning segment. Residues 64–72 (AKNRNLHSP) are Cytoplasmic-facing. A helical membrane pass occupies residues 73–93 (MYCFICCLALSDLLVSVSNVL). The Extracellular portion of the chain corresponds to 94-118 (ETAVMLLLEAGALAAQATVVQQLDN). The chain crosses the membrane as a helical span at residues 119–140 (IIDVLVCSSMVSSLCFLGAIAM). Over 141 to 163 (DRYISIFYALRYHSIVTLSRAQW) the chain is Cytoplasmic. A helical transmembrane segment spans residues 164–183 (ATAAVWAAGILSSTLFIAYY). Topologically, residues 184–191 (DHTAVLLC) are extracellular. Residues 192–211 (LVVFFLAMLVLMAVLYAHML) traverse the membrane as a helical segment. Topologically, residues 212-240 (TQACQHVQGITRLHKRQHLVQQGFGLKGA) are cytoplasmic. Residues 241–266 (ATLTILLGVFLLCWGPFFLHLTLIAV) traverse the membrane as a helical segment. Over 267-279 (CPQHPTCSCVFKN) the chain is Extracellular. A helical transmembrane segment spans residues 280-300 (FKLFLALIICNAIVDPLIYAF). Residues 301 to 317 (RXQELRKTLKEVLLFSW) are Cytoplasmic-facing.

The protein belongs to the G-protein coupled receptor 1 family. As to quaternary structure, interacts with MGRN1, but does not undergo MGRN1-mediated ubiquitination; this interaction competes with GNAS-binding and thus inhibits agonist-induced cAMP production. Interacts with OPN3; the interaction results in a decrease in MC1R-mediated cAMP signaling and ultimately a decrease in melanin production in melanocytes.

The protein localises to the cell membrane. In terms of biological role, receptor for MSH (alpha, beta and gamma) and ACTH. The activity of this receptor is mediated by G proteins which activate adenylate cyclase. Mediates melanogenesis, the production of eumelanin (black/brown) and phaeomelanin (red/yellow), via regulation of cAMP signaling in melanocytes. The sequence is that of Melanocyte-stimulating hormone receptor (MC1R) from Loris tardigradus (Slender loris).